We begin with the raw amino-acid sequence, 428 residues long: Adenylosuccinate synthetase (428 aa).

GTP contacts are provided by residues 12 to 18 (GDEGKGK) and 40 to 42 (GHT). Aspartate 13 serves as the catalytic Proton acceptor. Residues aspartate 13 and glycine 40 each contribute to the Mg(2+) site. Residues 13–16 (DEGK), 38–41 (NAGH), threonine 130, arginine 144, glutamine 225, threonine 240, and arginine 304 contribute to the IMP site. Histidine 41 acts as the Proton donor in catalysis. 300 to 306 (VTTGRAR) is a substrate binding site. GTP contacts are provided by residues arginine 306, 332 to 334 (KID), and 414 to 416 (SVG).

Belongs to the adenylosuccinate synthetase family. Homodimer. The cofactor is Mg(2+).

The protein resides in the cytoplasm. It catalyses the reaction IMP + L-aspartate + GTP = N(6)-(1,2-dicarboxyethyl)-AMP + GDP + phosphate + 2 H(+). The protein operates within purine metabolism; AMP biosynthesis via de novo pathway; AMP from IMP: step 1/2. Its function is as follows. Plays an important role in the de novo pathway of purine nucleotide biosynthesis. Catalyzes the first committed step in the biosynthesis of AMP from IMP. The polypeptide is Adenylosuccinate synthetase (Clostridium botulinum (strain ATCC 19397 / Type A)).